Here is a 145-residue protein sequence, read N- to C-terminus: MEGYDNGSLYAPFLSLKSHSKPELHQGEEESSKVRSEGCSKSVESSKKKGKKQRYAFQTRSQVDILDDGYRWRKYGQKAVKNNKFPRSYYRCTYGGCNVKKQVQRLTVDQEVVVTTYEGVHSHPIEKSTENFEHILTQMQIYSSF.

Residues 20–38 show a composition bias toward basic and acidic residues; the sequence is SKPELHQGEEESSKVRSEG. The segment at 20-55 is disordered; sequence SKPELHQGEEESSKVRSEGCSKSVESSKKKGKKQRY. Residues 61–126 constitute a DNA-binding region (WRKY); sequence SQVDILDDGY…YEGVHSHPIE (66 aa).

Belongs to the WRKY group II-c family.

It is found in the nucleus. In terms of biological role, transcription factor. Interacts specifically with the W box (5'-(T)TGAC[CT]-3'), a frequently occurring elicitor-responsive cis-acting element. This Arabidopsis thaliana (Mouse-ear cress) protein is Probable WRKY transcription factor 75 (WRKY75).